The chain runs to 452 residues: UPF0210 protein Csac_1314 (452 aa).

This sequence belongs to the UPF0210 family. In terms of assembly, homodimer.

The protein is UPF0210 protein Csac_1314 of Caldicellulosiruptor saccharolyticus (strain ATCC 43494 / DSM 8903 / Tp8T 6331).